A 140-amino-acid chain; its full sequence is Small ribosomal subunit protein uS12 (140 aa).

Position 59 is a hydroxyproline (Pro-59).

The protein belongs to the universal ribosomal protein uS12 family.

The polypeptide is Small ribosomal subunit protein uS12 (RPS23) (Encephalitozoon cuniculi (strain GB-M1) (Microsporidian parasite)).